A 211-amino-acid chain; its full sequence is Dual specificity protein phosphatase 26 (211 aa).

The Tyrosine-protein phosphatase domain maps to 60–207 (NHADEVWPGL…LLALDRRLRQ (148 aa)). Catalysis depends on cysteine 152, which acts as the Phosphocysteine intermediate.

Belongs to the protein-tyrosine phosphatase family. Non-receptor class dual specificity subfamily. As to quaternary structure, interacts with HSF4.

The protein resides in the cytoplasm. It localises to the nucleus. It is found in the golgi apparatus. It carries out the reaction O-phospho-L-tyrosyl-[protein] + H2O = L-tyrosyl-[protein] + phosphate. The catalysed reaction is O-phospho-L-seryl-[protein] + H2O = L-seryl-[protein] + phosphate. The enzyme catalyses O-phospho-L-threonyl-[protein] + H2O = L-threonyl-[protein] + phosphate. Inactivates MAPK1 and MAPK3 which leads to dephosphorylation of heat shock factor protein 4 and a reduction in its DNA-binding activity. The polypeptide is Dual specificity protein phosphatase 26 (DUSP26) (Bos taurus (Bovine)).